Consider the following 283-residue polypeptide: Putative pyruvate, phosphate dikinase regulatory protein (283 aa).

Gly156 to Thr163 serves as a coordination point for ADP.

This sequence belongs to the pyruvate, phosphate/water dikinase regulatory protein family. PDRP subfamily.

It catalyses the reaction N(tele)-phospho-L-histidyl/L-threonyl-[pyruvate, phosphate dikinase] + ADP = N(tele)-phospho-L-histidyl/O-phospho-L-threonyl-[pyruvate, phosphate dikinase] + AMP + H(+). The enzyme catalyses N(tele)-phospho-L-histidyl/O-phospho-L-threonyl-[pyruvate, phosphate dikinase] + phosphate + H(+) = N(tele)-phospho-L-histidyl/L-threonyl-[pyruvate, phosphate dikinase] + diphosphate. Bifunctional serine/threonine kinase and phosphorylase involved in the regulation of the pyruvate, phosphate dikinase (PPDK) by catalyzing its phosphorylation/dephosphorylation. The sequence is that of Putative pyruvate, phosphate dikinase regulatory protein from Desulfotalea psychrophila (strain LSv54 / DSM 12343).